The sequence spans 100 residues: Large ribosomal subunit protein bL27 (100 aa).

The propeptide occupies 1 to 9; it reads MLVMNLQLF.

Belongs to the bacterial ribosomal protein bL27 family. In terms of processing, the N-terminus is cleaved by ribosomal processing cysteine protease Prp.

The sequence is that of Large ribosomal subunit protein bL27 from Clostridium botulinum (strain Hall / ATCC 3502 / NCTC 13319 / Type A).